The chain runs to 428 residues: MVIFKKFILKISSLRFAILLIIFIAISSGVGTFIPQGNDQQEYIDFYNETPILGFINGSQVIRLQLDHIYTSNWFLFSLILLCISLAACSFRRQIPSLKAALKWTDYKDEKKFYKLELITNYEIIQDADHILKADSLLRKKGWNISKFENRLSARKGLEGKLGPIIVHIGLIILLIGSAYGNFSSQSKEQYLRLGESLDLINESTNSRVKIKLKNFFIERESDGKPKQFISNLEFFSKQQNLNEIKTTQVNQPIRFKGLTIYQADWSVSNIVMEIDSVLYQLQLKPIPEIGDQIWGLLIELGRENKKNYLLTIDNENGPLKVSNIEDFSENFVYLNNNPIEINSSKLSLKKIIPSSGLIIKNDPSIPFIYLSFTLIIVGTILSLIPTNQIWILFNENTNKLFIGGLSNRNLLGFKKEFLKLSDEIKNN.

The next 3 helical transmembrane spans lie at L14–I34, S72–R92, and L162–N182.

This sequence belongs to the Ccs1/CcsB family. As to quaternary structure, may interact with CcsA.

Its subcellular location is the cellular thylakoid membrane. Functionally, required during biogenesis of c-type cytochromes (cytochrome c6 and cytochrome f) at the step of heme attachment. In Prochlorococcus marinus subsp. pastoris (strain CCMP1986 / NIES-2087 / MED4), this protein is Cytochrome c biogenesis protein CcsB.